Reading from the N-terminus, the 117-residue chain is Hydrogenase maturation factor HypA (117 aa).

His2 is a binding site for Ni(2+). Residues Cys73, Cys76, Cys90, and Cys93 each coordinate Zn(2+).

It belongs to the HypA/HybF family.

Functionally, involved in the maturation of [NiFe] hydrogenases. Required for nickel insertion into the metal center of the hydrogenase. The sequence is that of Hydrogenase maturation factor HypA from Pectobacterium atrosepticum (strain SCRI 1043 / ATCC BAA-672) (Erwinia carotovora subsp. atroseptica).